Reading from the N-terminus, the 1486-residue chain is Chromosome partition protein MukB (1486 aa).

Residue 34 to 41 (GGNGAGKS) coordinates ATP. 3 coiled-coil regions span residues 326–418 (LEAD…QYNQ), 444–480 (LETF…QAYQ), and 509–603 (RHLA…RAPV). The interval 666 to 783 (PGGSEDQRLN…EVPLFGRAAR (118 aa)) is flexible hinge. Coiled coils occupy residues 835 to 923 (EAEI…AKLE), 977 to 1115 (EMLS…TAKA), and 1209 to 1266 (VEAI…QNVS).

The protein belongs to the SMC family. MukB subfamily. In terms of assembly, homodimerization via its hinge domain. Binds to DNA via its C-terminal region. Interacts, and probably forms a ternary complex, with MukE and MukF via its C-terminal region. The complex formation is stimulated by calcium or magnesium. Interacts with tubulin-related protein FtsZ.

It is found in the cytoplasm. It localises to the nucleoid. In terms of biological role, plays a central role in chromosome condensation, segregation and cell cycle progression. Functions as a homodimer, which is essential for chromosome partition. Involved in negative DNA supercoiling in vivo, and by this means organize and compact chromosomes. May achieve or facilitate chromosome segregation by condensation DNA from both sides of a centrally located replisome during cell division. The sequence is that of Chromosome partition protein MukB from Escherichia coli (strain K12 / MC4100 / BW2952).